Reading from the N-terminus, the 104-residue chain is Pyrimidine/purine nucleoside phosphorylase (104 aa).

This sequence belongs to the nucleoside phosphorylase PpnP family.

The catalysed reaction is a purine D-ribonucleoside + phosphate = a purine nucleobase + alpha-D-ribose 1-phosphate. It catalyses the reaction adenosine + phosphate = alpha-D-ribose 1-phosphate + adenine. The enzyme catalyses cytidine + phosphate = cytosine + alpha-D-ribose 1-phosphate. It carries out the reaction guanosine + phosphate = alpha-D-ribose 1-phosphate + guanine. The catalysed reaction is inosine + phosphate = alpha-D-ribose 1-phosphate + hypoxanthine. It catalyses the reaction thymidine + phosphate = 2-deoxy-alpha-D-ribose 1-phosphate + thymine. The enzyme catalyses uridine + phosphate = alpha-D-ribose 1-phosphate + uracil. It carries out the reaction xanthosine + phosphate = alpha-D-ribose 1-phosphate + xanthine. Its function is as follows. Catalyzes the phosphorolysis of diverse nucleosides, yielding D-ribose 1-phosphate and the respective free bases. Can use uridine, adenosine, guanosine, cytidine, thymidine, inosine and xanthosine as substrates. Also catalyzes the reverse reactions. The chain is Pyrimidine/purine nucleoside phosphorylase from Syntrophotalea carbinolica (strain DSM 2380 / NBRC 103641 / GraBd1) (Pelobacter carbinolicus).